We begin with the raw amino-acid sequence, 286 residues long: Thymidylate synthase (286 aa).

R21 contacts dUMP. N51 is a binding site for (6R)-5,10-methylene-5,6,7,8-tetrahydrofolate. DUMP is bound at residue 150 to 151 (RR). C170 functions as the Nucleophile in the catalytic mechanism. DUMP is bound by residues 190–193 (RSAD), N201, and 231–233 (HIY). Position 193 (D193) interacts with (6R)-5,10-methylene-5,6,7,8-tetrahydrofolate. Residue A285 participates in (6R)-5,10-methylene-5,6,7,8-tetrahydrofolate binding.

This sequence belongs to the thymidylate synthase family. Bacterial-type ThyA subfamily. In terms of assembly, homodimer.

Its subcellular location is the cytoplasm. The catalysed reaction is dUMP + (6R)-5,10-methylene-5,6,7,8-tetrahydrofolate = 7,8-dihydrofolate + dTMP. Its pathway is pyrimidine metabolism; dTTP biosynthesis. Functionally, catalyzes the reductive methylation of 2'-deoxyuridine-5'-monophosphate (dUMP) to 2'-deoxythymidine-5'-monophosphate (dTMP) while utilizing 5,10-methylenetetrahydrofolate (mTHF) as the methyl donor and reductant in the reaction, yielding dihydrofolate (DHF) as a by-product. This enzymatic reaction provides an intracellular de novo source of dTMP, an essential precursor for DNA biosynthesis. The polypeptide is Thymidylate synthase (Mycoplasmopsis pulmonis (strain UAB CTIP) (Mycoplasma pulmonis)).